The primary structure comprises 267 residues: Indole-3-glycerol phosphate synthase (267 aa).

The protein belongs to the TrpC family.

The catalysed reaction is 1-(2-carboxyphenylamino)-1-deoxy-D-ribulose 5-phosphate + H(+) = (1S,2R)-1-C-(indol-3-yl)glycerol 3-phosphate + CO2 + H2O. It participates in amino-acid biosynthesis; L-tryptophan biosynthesis; L-tryptophan from chorismate: step 4/5. This is Indole-3-glycerol phosphate synthase from Polynucleobacter necessarius subsp. necessarius (strain STIR1).